The sequence spans 488 residues: DNA polymerase processivity factor (488 aa).

3 disordered regions span residues methionine 1–glutamate 26, serine 331–serine 453, and proline 469–proline 488. Residues serine 331 to serine 344 show a composition bias toward low complexity. The segment covering glutamate 345–aspartate 355 has biased composition (polar residues). Positions alanine 368–alanine 379 are enriched in low complexity. The span at proline 383–threonine 393 shows a compositional bias: polar residues. The short motif at lysine 394–lysine 413 is the Bipartite nuclear localization signal element. Residues serine 398–leucine 409 show a composition bias toward basic and acidic residues. Over residues alanine 437–serine 453 the composition is skewed to low complexity.

This sequence belongs to the herpesviridae DNA polymerase processivity factor family. As to quaternary structure, interacts with the DNA polymerase catalytic subunit UL30. Interacts with the origin-binding protein.

It localises to the host nucleus. In terms of biological role, plays an essential role in viral DNA replication by acting as the polymerase accessory subunit. Associates with the viral polymerase to increase its processivity and forms high-affinity direct interactions with DNA. Facilitates the origin-binding protein UL9 loading onto DNA thus increasing its ability to assemble into a functional complex capable of unwinding duplex DNA. The polypeptide is DNA polymerase processivity factor (Homo sapiens (Human)).